The primary structure comprises 1440 residues: Gag-Pol polyprotein (1440 aa).

Gly-2 carries N-myristoyl glycine; by host lipidation. Residues 7 to 31 are interaction with Gp41; that stretch reads VLSGGKLDAWEKIRLRPGGKKKYRL. Positions 8-43 are interaction with host CALM1; sequence LSGGKLDAWEKIRLRPGGKKKYRLKHLVWASRELER. Residues 12 to 19 are interaction with host AP3D1; that stretch reads KLDAWEKI. The interaction with membrane phosphatidylinositol 4,5-bisphosphate and RNA stretch occupies residues 14-33; sequence DAWEKIRLRPGGKKKYRLKH. Positions 16-22 match the Nuclear export signal motif; sequence WEKIRLR. Residues 26 to 32 carry the Nuclear localization signal motif; it reads KKKYRLK. The interaction with membrane phosphatidylinositol 4,5-bisphosphate stretch occupies residues 73 to 77; it reads EEIKS. Residue Tyr-138 is modified to Phosphotyrosine; by host. Positions 195 to 233 are interaction with human PPIA/CYPA and NUP153; the sequence is NIVGGHQAAMQMLKDTINEEAADWDRVHPVHAGPIPPGQ. A dimerization/Multimerization of capsid protein p24 region spans residues 283–369; sequence YSPVSILDIR…GGPSHKARVL (87 aa). 2 consecutive CCHC-type zinc fingers follow at residues 396-413 and 417-434; these read IKCFNCGKEGHLARNCRA and KGCWKCGKEGHQMKDCTE. A dimerization of protease region spans residues 494–498; sequence PQITL. The Peptidase A2 domain occupies 513–582; that stretch reads KEALLDTGAD…TPVNIIGRNM (70 aa). Asp-518 (for protease activity; shared with dimeric partner) is an active-site residue. 2 dimerization of protease regions span residues 542 to 548 and 581 to 593; these read GIGGFIK and NMLTQIGCTLNFP. One can recognise a Reverse transcriptase domain in the interval 636–826; the sequence is EGKILKIGPE…PPFLWMGYEL (191 aa). Residues Asp-702, Asp-777, and Asp-778 each contribute to the Mg(2+) site. The RT 'primer grip' stretch occupies residues 819–827; the sequence is FLWMGYELH. The short motif at 990–1006 is the Tryptophan repeat motif element; sequence WEAWWTEYWQATWIPEW. The 124-residue stretch at 1026-1149 folds into the RNase H type-1 domain; sequence IVGAETFYVD…VDKLVSSGIR (124 aa). Residues Asp-1035, Glu-1070, Asp-1090, and Asp-1141 each contribute to the Mg(2+) site. Residues 1155-1196 form an Integrase-type zinc finger; sequence DGIDKAQEEHEKYHSNWRAMASDFNLPPIVAKEIVASCDKCQ. Residues His-1164, His-1168, Cys-1192, and Cys-1195 each contribute to the Zn(2+) site. Positions 1206-1356 constitute an Integrase catalytic domain; sequence VDCSPGIWQL…SAGERIIDMI (151 aa). Mg(2+)-binding residues include Asp-1216, Asp-1268, and Glu-1304. The integrase-type DNA-binding region spans 1375–1422; the sequence is FRVYYRDNRDPIWKGPAKLLWKGEGAVVIQDNSDIKVVPRRKAKIIRD.

Homotrimer; further assembles as hexamers of trimers. Interacts with gp41 (via C-terminus). Interacts with host CALM1; this interaction induces a conformational change in the Matrix protein, triggering exposure of the myristate group. Interacts with host AP3D1; this interaction allows the polyprotein trafficking to multivesicular bodies during virus assembly. Part of the pre-integration complex (PIC) which is composed of viral genome, matrix protein, Vpr and integrase. In terms of assembly, homodimer; the homodimer further multimerizes as homohexamers or homopentamers. Interacts with human PPIA/CYPA; This interaction stabilizes the capsid. Interacts with human NUP153. Interacts with host PDZD8; this interaction stabilizes the capsid. Interacts with monkey TRIM5; this interaction destabilizes the capsid. As to quaternary structure, homodimer, whose active site consists of two apposed aspartic acid residues. Heterodimer of p66 RT and p51 RT (RT p66/p51). Heterodimerization of RT is essential for DNA polymerase activity. The overall folding of the subdomains is similar in p66 RT and p51 RT but the spatial arrangements of the subdomains are dramatically different. In terms of assembly, homotetramer; may further associate as a homohexadecamer. Part of the pre-integration complex (PIC) which is composed of viral genome, matrix protein, Vpr and integrase. Interacts with human SMARCB1/INI1 and human PSIP1/LEDGF isoform 1. Interacts with human KPNA3; this interaction might play a role in nuclear import of the pre-integration complex. Interacts with human NUP153; this interaction might play a role in nuclear import of the pre-integration complex. Mg(2+) serves as cofactor. Post-translationally, specific enzymatic cleavages by the viral protease yield mature proteins. The protease is released by autocatalytic cleavage. The polyprotein is cleaved during and after budding, this process is termed maturation. Proteolytic cleavage of p66 RT removes the RNase H domain to yield the p51 RT subunit. Nucleocapsid protein p7 might be further cleaved after virus entry. Tyrosine phosphorylated presumably in the virion by a host kinase. Phosphorylation is apparently not a major regulator of membrane association. In terms of processing, phosphorylated possibly by host MAPK1; this phosphorylation is necessary for Pin1-mediated virion uncoating. Post-translationally, methylated by host PRMT6, impairing its function by reducing RNA annealing and the initiation of reverse transcription.

Its subcellular location is the host cell membrane. It is found in the host endosome. It localises to the host multivesicular body. The protein localises to the virion membrane. The protein resides in the host nucleus. Its subcellular location is the host cytoplasm. It is found in the virion. The enzyme catalyses Specific for a P1 residue that is hydrophobic, and P1' variable, but often Pro.. It carries out the reaction Endohydrolysis of RNA in RNA/DNA hybrids. Three different cleavage modes: 1. sequence-specific internal cleavage of RNA. Human immunodeficiency virus type 1 and Moloney murine leukemia virus enzymes prefer to cleave the RNA strand one nucleotide away from the RNA-DNA junction. 2. RNA 5'-end directed cleavage 13-19 nucleotides from the RNA end. 3. DNA 3'-end directed cleavage 15-20 nucleotides away from the primer terminus.. The catalysed reaction is 3'-end directed exonucleolytic cleavage of viral RNA-DNA hybrid.. It catalyses the reaction DNA(n) + a 2'-deoxyribonucleoside 5'-triphosphate = DNA(n+1) + diphosphate. With respect to regulation, protease: The viral protease is inhibited by many synthetic protease inhibitors (PIs), such as amprenavir, atazanavir, indinavir, loprinavir, nelfinavir, ritonavir and saquinavir. Use of protease inhibitors in tritherapy regimens permit more ambitious therapeutic strategies. Reverse transcriptase/ribonuclease H: RT can be inhibited either by nucleoside RT inhibitors (NRTIs) or by non nucleoside RT inhibitors (NNRTIs). NRTIs act as chain terminators, whereas NNRTIs inhibit DNA polymerization by binding a small hydrophobic pocket near the RT active site and inducing an allosteric change in this region. Classical NRTIs are abacavir, adefovir (PMEA), didanosine (ddI), lamivudine (3TC), stavudine (d4T), tenofovir (PMPA), zalcitabine (ddC), and zidovudine (AZT). Classical NNRTIs are atevirdine (BHAP U-87201E), delavirdine, efavirenz (DMP-266), emivirine (I-EBU), and nevirapine (BI-RG-587). The tritherapies used as a basic effective treatment of AIDS associate two NRTIs and one NNRTI. In terms of biological role, mediates, with Gag polyprotein, the essential events in virion assembly, including binding the plasma membrane, making the protein-protein interactions necessary to create spherical particles, recruiting the viral Env proteins, and packaging the genomic RNA via direct interactions with the RNA packaging sequence (Psi). Gag-Pol polyprotein may regulate its own translation, by the binding genomic RNA in the 5'-UTR. At low concentration, the polyprotein would promote translation, whereas at high concentration, the polyprotein would encapsidate genomic RNA and then shut off translation. Targets the polyprotein to the plasma membrane via a multipartite membrane-binding signal, that includes its myristoylated N-terminus. Matrix protein is part of the pre-integration complex. Implicated in the release from host cell mediated by Vpu. Binds to RNA. Its function is as follows. Forms the conical core that encapsulates the genomic RNA-nucleocapsid complex in the virion. Most core are conical, with only 7% tubular. The core is constituted by capsid protein hexamer subunits. The core is disassembled soon after virion entry. Host restriction factors such as TRIM5-alpha or TRIMCyp bind retroviral capsids and cause premature capsid disassembly, leading to blocks in reverse transcription. Capsid restriction by TRIM5 is one of the factors which restricts HIV-1 to the human species. Host PIN1 apparently facilitates the virion uncoating. On the other hand, interactions with PDZD8 or CYPA stabilize the capsid. Functionally, encapsulates and protects viral dimeric unspliced genomic RNA (gRNA). Binds these RNAs through its zinc fingers. Acts as a nucleic acid chaperone which is involved in rearangement of nucleic acid secondary structure during gRNA retrotranscription. Also facilitates template switch leading to recombination. As part of the polyprotein, participates in gRNA dimerization, packaging, tRNA incorporation and virion assembly. In terms of biological role, aspartyl protease that mediates proteolytic cleavages of Gag and Gag-Pol polyproteins during or shortly after the release of the virion from the plasma membrane. Cleavages take place as an ordered, step-wise cascade to yield mature proteins. This process is called maturation. Displays maximal activity during the budding process just prior to particle release from the cell. Also cleaves Nef and Vif, probably concomitantly with viral structural proteins on maturation of virus particles. Hydrolyzes host EIF4GI and PABP1 in order to shut off the capped cellular mRNA translation. The resulting inhibition of cellular protein synthesis serves to ensure maximal viral gene expression and to evade host immune response. Also mediates cleavage of host YTHDF3. Mediates cleavage of host CARD8, thereby activating the CARD8 inflammasome, leading to the clearance of latent HIV-1 in patient CD4(+) T-cells after viral reactivation; in contrast, HIV-1 can evade CARD8-sensing when its protease remains inactive in infected cells prior to viral budding. Multifunctional enzyme that converts the viral RNA genome into dsDNA in the cytoplasm, shortly after virus entry into the cell. This enzyme displays a DNA polymerase activity that can copy either DNA or RNA templates, and a ribonuclease H (RNase H) activity that cleaves the RNA strand of RNA-DNA heteroduplexes in a partially processive 3' to 5' endonucleasic mode. Conversion of viral genomic RNA into dsDNA requires many steps. A tRNA(3)-Lys binds to the primer-binding site (PBS) situated at the 5'-end of the viral RNA. RT uses the 3' end of the tRNA primer to perform a short round of RNA-dependent minus-strand DNA synthesis. The reading proceeds through the U5 region and ends after the repeated (R) region which is present at both ends of viral RNA. The portion of the RNA-DNA heteroduplex is digested by the RNase H, resulting in a ssDNA product attached to the tRNA primer. This ssDNA/tRNA hybridizes with the identical R region situated at the 3' end of viral RNA. This template exchange, known as minus-strand DNA strong stop transfer, can be either intra- or intermolecular. RT uses the 3' end of this newly synthesized short ssDNA to perform the RNA-dependent minus-strand DNA synthesis of the whole template. RNase H digests the RNA template except for two polypurine tracts (PPTs) situated at the 5'-end and near the center of the genome. It is not clear if both polymerase and RNase H activities are simultaneous. RNase H probably can proceed both in a polymerase-dependent (RNA cut into small fragments by the same RT performing DNA synthesis) and a polymerase-independent mode (cleavage of remaining RNA fragments by free RTs). Secondly, RT performs DNA-directed plus-strand DNA synthesis using the PPTs that have not been removed by RNase H as primers. PPTs and tRNA primers are then removed by RNase H. The 3' and 5' ssDNA PBS regions hybridize to form a circular dsDNA intermediate. Strand displacement synthesis by RT to the PBS and PPT ends produces a blunt ended, linear dsDNA copy of the viral genome that includes long terminal repeats (LTRs) at both ends. Its function is as follows. Catalyzes viral DNA integration into the host chromosome, by performing a series of DNA cutting and joining reactions. This enzyme activity takes place after virion entry into a cell and reverse transcription of the RNA genome in dsDNA. The first step in the integration process is 3' processing. This step requires a complex comprising the viral genome, matrix protein, Vpr and integrase. This complex is called the pre-integration complex (PIC). The integrase protein removes 2 nucleotides from each 3' end of the viral DNA, leaving recessed CA OH's at the 3' ends. In the second step, the PIC enters cell nucleus. This process is mediated through integrase and Vpr proteins, and allows the virus to infect a non dividing cell. This ability to enter the nucleus is specific of lentiviruses, other retroviruses cannot and rely on cell division to access cell chromosomes. In the third step, termed strand transfer, the integrase protein joins the previously processed 3' ends to the 5' ends of strands of target cellular DNA at the site of integration. The 5'-ends are produced by integrase-catalyzed staggered cuts, 5 bp apart. A Y-shaped, gapped, recombination intermediate results, with the 5'-ends of the viral DNA strands and the 3' ends of target DNA strands remaining unjoined, flanking a gap of 5 bp. The last step is viral DNA integration into host chromosome. This involves host DNA repair synthesis in which the 5 bp gaps between the unjoined strands are filled in and then ligated. Since this process occurs at both cuts flanking the HIV genome, a 5 bp duplication of host DNA is produced at the ends of HIV-1 integration. Alternatively, Integrase may catalyze the excision of viral DNA just after strand transfer, this is termed disintegration. The polypeptide is Gag-Pol polyprotein (gag-pol) (Human immunodeficiency virus type 1 group M subtype A (isolate MAL) (HIV-1)).